Reading from the N-terminus, the 122-residue chain is Ig heavy chain V region M511 (122 aa).

One can recognise an Ig-like domain in the interval 1 to 114; the sequence is EVKLVESGGG…SYWYFDVWGA (114 aa).

The protein is Ig heavy chain V region M511 of Mus musculus (Mouse).